Consider the following 289-residue polypeptide: Phosphatidylglycerol--prolipoprotein diacylglyceryl transferase (289 aa).

4 helical membrane passes run 21-41 (IGPLSIRWYGLLIASAVLLGI), 53-73 (IDPNAIADLAVWLVIGAIPAA), 95-115 (IWHGGIAIHGAILGGTAALIL), and 122-142 (IPIWQLTDVVVPSLALGQAIG). Arginine 143 is a binding site for a 1,2-diacyl-sn-glycero-3-phospho-(1'-sn-glycerol). 3 helical membrane-spanning segments follow: residues 182 to 202 (PTFLYESLWNLLLCLLLIWLF), 215 to 235 (GVMTCIYLIGYSLGRIWIEGL), and 247 to 267 (IAQMVSIVAIAFGVLGLVWIY).

This sequence belongs to the Lgt family.

The protein localises to the cell inner membrane. It carries out the reaction L-cysteinyl-[prolipoprotein] + a 1,2-diacyl-sn-glycero-3-phospho-(1'-sn-glycerol) = an S-1,2-diacyl-sn-glyceryl-L-cysteinyl-[prolipoprotein] + sn-glycerol 1-phosphate + H(+). Its pathway is protein modification; lipoprotein biosynthesis (diacylglyceryl transfer). Functionally, catalyzes the transfer of the diacylglyceryl group from phosphatidylglycerol to the sulfhydryl group of the N-terminal cysteine of a prolipoprotein, the first step in the formation of mature lipoproteins. The protein is Phosphatidylglycerol--prolipoprotein diacylglyceryl transferase of Synechococcus elongatus (strain ATCC 33912 / PCC 7942 / FACHB-805) (Anacystis nidulans R2).